Consider the following 644-residue polypeptide: Macrolide export ATP-binding/permease protein MacB (644 aa).

An ABC transporter domain is found at 4-242 (IECKNINRYF…SNVGRIQEKA (239 aa)). ATP is bound at residue 40–47 (GQSGSGKS). 4 consecutive transmembrane segments (helical) span residues 270–290 (LLTM…VALG), 524–544 (IALI…LVSV), 574–594 (LICV…SLVF), and 607–627 (AMSV…FGFM).

It belongs to the ABC transporter superfamily. Macrolide exporter (TC 3.A.1.122) family. In terms of assembly, homodimer.

The protein resides in the cell inner membrane. Its function is as follows. Non-canonical ABC transporter that contains transmembrane domains (TMD), which form a pore in the inner membrane, and an ATP-binding domain (NBD), which is responsible for energy generation. Confers resistance against macrolides. In Neisseria meningitidis serogroup A / serotype 4A (strain DSM 15465 / Z2491), this protein is Macrolide export ATP-binding/permease protein MacB.